The sequence spans 413 residues: Acyltransferase mokF (413 aa).

Position 93 (arginine 93) interacts with monacolin J. Serine 96 serves as the catalytic Acyl-ester intermediate. 3 residues coordinate monacolin J: arginine 193, tyrosine 208, and tyrosine 278. Glycine 386 serves as a coordination point for 2-methylbutanoate.

Belongs to the class-A beta-lactamase family.

It catalyses the reaction monacolin J carboxylate + (S)-2-methylbutanoyl-[2-methylbutanoate polyketide synthase] = lovastatin carboxylate + holo-[2-methylbutanoate polyketide synthase]. The protein operates within polyketide biosynthesis; lovastatin biosynthesis. Functionally, acyltransferase; part of the gene cluster that mediates the biosynthesis of monakolin K, also known as lovastatin, and which acts as a potent competitive inhibitor of HMG-CoA reductase. Monakolin K biosynthesis is performed in two stages. The first stage is catalyzed by the nonaketide synthase mokA, which belongs to type I polyketide synthases and catalyzes the iterative nine-step formation of the polyketide. This PKS stage is completed by the action of dehydrogenase mokE, which catalyzes the NADPH-dependent reduction of the unsaturated tetra-, penta- and heptaketide intermediates that arise during the mokA-mediated biosynthesis of the nonaketide chain and leads to dihydromonacolin L. Covalently bound dihydromonacolin L is released from mokA by the mokD esterase. Conversion of dihydromonacolin L into monacolin L and then monacolin J is subsequently performed with the participation of molecular oxygen and P450 monoogygenase mokC. Finally, mokF performs the conversion of monacoline J to monacoline K through the addition of the side-chain diketide moiety (2R)-2-methylbutanoate produced by the diketide synthase mokB. In Monascus pilosus (Red mold), this protein is Acyltransferase mokF.